Reading from the N-terminus, the 255-residue chain is 5'-nucleotidase SurE (255 aa).

Positions 8, 9, 39, and 91 each coordinate a divalent metal cation.

Belongs to the SurE nucleotidase family. A divalent metal cation is required as a cofactor.

The protein localises to the cytoplasm. It carries out the reaction a ribonucleoside 5'-phosphate + H2O = a ribonucleoside + phosphate. Its function is as follows. Nucleotidase that shows phosphatase activity on nucleoside 5'-monophosphates. The sequence is that of 5'-nucleotidase SurE from Nitrosospira multiformis (strain ATCC 25196 / NCIMB 11849 / C 71).